The following is a 137-amino-acid chain: Altered inheritance of mitochondria protein 11 (137 aa).

2 consecutive transmembrane segments (helical) span residues 20 to 37 (YGAA…SRAI) and 66 to 88 (LTYA…CWAL).

This sequence belongs to the AIM11 family.

It localises to the membrane. In Saccharomyces cerevisiae (strain YJM789) (Baker's yeast), this protein is Altered inheritance of mitochondria protein 11 (AIM11).